Consider the following 324-residue polypeptide: MKFDRHRRLRSSATMRDMVRENHVRKEDLIYPIFVVEKDDVKKEIKSLPGVYQISLNLLESELKEAYDLGIRAIMFFGVPNSKDDIGTGAYIHDGVIQQATRIAKKMYDDLLIVADTCLCEYTDHGHCGVIDDHTHDVDNDKSLPLLVKTAISQVEAGADIIAPSNMMDGFVAEIRRGLDEAGYYNIPIMSYGVKYASSFFGPFRDAADSAPSFGDRKTYQMDPANRLEALRELESDLKEGCDMMIVKPALSYLDIVRDVKNHTNVPVVAYNVSGEYSMTKAAAQNGWIDEERVVMEQMVSMKRAGADMIITYFAKDICRYLDK.

Cysteine 118, cysteine 120, and cysteine 128 together coordinate Zn(2+). Lysine 195 acts as the Schiff-base intermediate with substrate in catalysis. 2 residues coordinate 5-aminolevulinate: arginine 205 and arginine 217. Glutamate 233 is a Mg(2+) binding site. Lysine 248 (schiff-base intermediate with substrate) is an active-site residue. Residues serine 274 and tyrosine 313 each coordinate 5-aminolevulinate.

Belongs to the ALAD family. In terms of assembly, homooctamer. Zn(2+) serves as cofactor.

It catalyses the reaction 2 5-aminolevulinate = porphobilinogen + 2 H2O + H(+). It participates in porphyrin-containing compound metabolism; protoporphyrin-IX biosynthesis; coproporphyrinogen-III from 5-aminolevulinate: step 1/4. Functionally, catalyzes an early step in the biosynthesis of tetrapyrroles. Binds two molecules of 5-aminolevulinate per subunit, each at a distinct site, and catalyzes their condensation to form porphobilinogen. In Staphylococcus aureus (strain NCTC 8325 / PS 47), this protein is Delta-aminolevulinic acid dehydratase (hemB).